The sequence spans 268 residues: Eukaryotic translation initiation factor 3 subunit J (268 aa).

Disordered regions lie at residues 1–27 (MSWD…DDEF), 40–63 (DAEE…KVDK), and 217–249 (LAKV…KKDQ). Residues 47 to 58 (QKQKPKAAPKAA) are compositionally biased toward basic residues. A coiled-coil region spans residues 191-221 (IESIRQTVATLNVLIKEKERQERQARLAKVK).

The protein belongs to the eIF-3 subunit J family. Component of the eukaryotic translation initiation factor 3 (eIF-3) complex.

Its subcellular location is the cytoplasm. Component of the eukaryotic translation initiation factor 3 (eIF-3) complex, which is involved in protein synthesis of a specialized repertoire of mRNAs and, together with other initiation factors, stimulates binding of mRNA and methionyl-tRNAi to the 40S ribosome. The eIF-3 complex specifically targets and initiates translation of a subset of mRNAs involved in cell proliferation. This chain is Eukaryotic translation initiation factor 3 subunit J, found in Eremothecium gossypii (strain ATCC 10895 / CBS 109.51 / FGSC 9923 / NRRL Y-1056) (Yeast).